The primary structure comprises 447 residues: Tubulin alpha-2 chain (447 aa).

GTP-binding residues include glutamine 11, glutamate 71, glycine 144, threonine 145, threonine 179, asparagine 206, and asparagine 228. Glutamate 71 serves as a coordination point for Mg(2+). Glutamate 254 is an active-site residue.

It belongs to the tubulin family. Dimer of alpha and beta chains. A typical microtubule is a hollow water-filled tube with an outer diameter of 25 nm and an inner diameter of 15 nM. Alpha-beta heterodimers associate head-to-tail to form protofilaments running lengthwise along the microtubule wall with the beta-tubulin subunit facing the microtubule plus end conferring a structural polarity. Microtubules usually have 13 protofilaments but different protofilament numbers can be found in some organisms and specialized cells. The cofactor is Mg(2+). Post-translationally, undergoes a tyrosination/detyrosination cycle, the cyclic removal and re-addition of a C-terminal tyrosine residue by the enzymes tubulin tyrosine carboxypeptidase (TTCP) and tubulin tyrosine ligase (TTL), respectively.

The protein localises to the cytoplasm. It is found in the cytoskeleton. The catalysed reaction is GTP + H2O = GDP + phosphate + H(+). Its function is as follows. Tubulin is the major constituent of microtubules, a cylinder consisting of laterally associated linear protofilaments composed of alpha- and beta-tubulin heterodimers. Microtubules grow by the addition of GTP-tubulin dimers to the microtubule end, where a stabilizing cap forms. Below the cap, tubulin dimers are in GDP-bound state, owing to GTPase activity of alpha-tubulin. This chain is Tubulin alpha-2 chain (TUBA2), found in Eleusine indica (Goosegrass).